The sequence spans 319 residues: uncharacterized protein (319 aa).

A compositionally biased stretch (low complexity) spans 268–312 (SSVVAVTHPPSTTSTTTSVSETLSSFIAPSDLSSQPSPSSHPSSP). Residues 268–319 (SSVVAVTHPPSTTSTTTSVSETLSSFIAPSDLSSQPSPSSHPSSPFGNHNEF) form a disordered region.

This is an uncharacterized protein from Lepidoptera (butterflies and moths).